Reading from the N-terminus, the 630-residue chain is Golgi apyrase (630 aa).

Residues 1–500 (MLIENTNDRF…RKQSSSLSNK (500 aa)) lie on the Lumenal side of the membrane. Residue Glu152 is the Proton acceptor of the active site. The chain crosses the membrane as a helical span at residues 501 to 517 (GFLMWFAIICCIFYLIF). Residues 518–630 (HRSHIIRRRF…SKFKDSRLYD (113 aa)) lie on the Cytoplasmic side of the membrane. The disordered stretch occupies residues 586-606 (SSATMQREHEPQRTASQSANL).

This sequence belongs to the GDA1/CD39 NTPase family. As to quaternary structure, interacts with activator subunit VMA13 of vacuolar H(+)-ATPase. Interacts with CDC55; this interaction is disrupted by adenovirus E4orf4, which remains associated with both YND1 and CDC55. It depends on Ca(2+) as a cofactor. Requires Mg(2+) as cofactor. Mn(2+) is required as a cofactor.

It is found in the golgi apparatus. Its subcellular location is the membrane. It carries out the reaction a ribonucleoside 5'-triphosphate + 2 H2O = a ribonucleoside 5'-phosphate + 2 phosphate + 2 H(+). The protein operates within protein modification; protein glycosylation. With respect to regulation, activity is inhibited both by interaction with VMA13 and by V-ATPase acidification of the lumen. The activity of VMA13 is not required for YND1 inhibition. In terms of biological role, catalyzes the hydrolysis of phosphoanhydride bonds of nucleoside tri- and di-phosphates. Has equal high activity toward ADP/ATP, GDP/GTP, and UDP/UTP and approximately 50% less toward CDP/CTP and thiamine pyrophosphate. Has no activity toward GMP. Required for Golgi glycosylation and cell wall integrity. Together with CDC55, required for adenovirus E4orf4 (early region 4 open reading frame 4) induced toxicity, the apyrase activity is not required for this function. Plays a role in sphingolipid synthesis. The sequence is that of Golgi apyrase (YND1) from Saccharomyces cerevisiae (strain ATCC 204508 / S288c) (Baker's yeast).